We begin with the raw amino-acid sequence, 207 residues long: LexA repressor (207 aa).

Residues 28 to 48 constitute a DNA-binding region (H-T-H motif); the sequence is VREIGEAVGLASSSTVHGHLS. Active-site for autocatalytic cleavage activity residues include serine 129 and lysine 167.

The protein belongs to the peptidase S24 family. Homodimer.

It carries out the reaction Hydrolysis of Ala-|-Gly bond in repressor LexA.. Represses a number of genes involved in the response to DNA damage (SOS response), including recA and lexA. In the presence of single-stranded DNA, RecA interacts with LexA causing an autocatalytic cleavage which disrupts the DNA-binding part of LexA, leading to derepression of the SOS regulon and eventually DNA repair. The sequence is that of LexA repressor from Halalkalibacterium halodurans (strain ATCC BAA-125 / DSM 18197 / FERM 7344 / JCM 9153 / C-125) (Bacillus halodurans).